The primary structure comprises 119 residues: Large ribosomal subunit protein uL24 (119 aa).

It belongs to the universal ribosomal protein uL24 family. As to quaternary structure, part of the 50S ribosomal subunit.

One of two assembly initiator proteins, it binds directly to the 5'-end of the 23S rRNA, where it nucleates assembly of the 50S subunit. In terms of biological role, located at the polypeptide exit tunnel on the outside of the subunit. The polypeptide is Large ribosomal subunit protein uL24 (Methanococcus vannielii).